A 601-amino-acid chain; its full sequence is N-acetyltransferase ESCO2 (601 aa).

Ser-29, Ser-75, Ser-223, and Ser-244 each carry phosphoserine. Residues 222 to 243 (SSLENEPSLGRTQKSKSEVIED) form a disordered region. The segment covering 282-305 (KEKLIKDSSDDRVSSKEHKVDKNE) has biased composition (basic and acidic residues). Residues 282 to 315 (KEKLIKDSSDDRVSSKEHKVDKNEAFSSEDSLGE) are disordered. Polar residues predominate over residues 306-315 (AFSSEDSLGE). Ser-312 is subject to Phosphoserine. Residues 387–411 (TVCKSCGMIYTASNPEDEMQHVQHH) form a CCHH-type zinc finger. Residue Ser-512 is modified to Phosphoserine.

This sequence belongs to the acetyltransferase family. ECO subfamily. In terms of tissue distribution, widely expressed in fetal tissues. In adult, it is expressed in thymus, placenta and small intestine.

The protein localises to the nucleus. Its subcellular location is the chromosome. It catalyses the reaction L-lysyl-[protein] + acetyl-CoA = N(6)-acetyl-L-lysyl-[protein] + CoA + H(+). In terms of biological role, acetyltransferase required for the establishment of sister chromatid cohesion. Couples the processes of cohesion and DNA replication to ensure that only sister chromatids become paired together. In contrast to the structural cohesins, the deposition and establishment factors are required only during the S phase. Acetylates the cohesin component SMC3. This chain is N-acetyltransferase ESCO2, found in Homo sapiens (Human).